The chain runs to 492 residues: uncharacterized protein (492 aa).

Belongs to the FGGY kinase family.

This is an uncharacterized protein from Escherichia coli (strain K12).